The chain runs to 596 residues: Chaperone protein DnaK (596 aa).

Phosphothreonine; by autocatalysis is present on Thr-174. Positions 576 to 596 (ANATKDQSSKDQEEVATVVEE) are disordered.

This sequence belongs to the heat shock protein 70 family.

In terms of biological role, acts as a chaperone. This is Chaperone protein DnaK from Mycoplasmopsis synoviae (strain 53) (Mycoplasma synoviae).